An 83-amino-acid chain; its full sequence is DNA-directed RNA polymerase subunit omega (83 aa).

This sequence belongs to the RNA polymerase subunit omega family. The RNAP catalytic core consists of 2 alpha, 1 beta, 1 beta' and 1 omega subunit. When a sigma factor is associated with the core the holoenzyme is formed, which can initiate transcription.

It catalyses the reaction RNA(n) + a ribonucleoside 5'-triphosphate = RNA(n+1) + diphosphate. Its function is as follows. Promotes RNA polymerase assembly. Latches the N- and C-terminal regions of the beta' subunit thereby facilitating its interaction with the beta and alpha subunits. The polypeptide is DNA-directed RNA polymerase subunit omega (Chromohalobacter salexigens (strain ATCC BAA-138 / DSM 3043 / CIP 106854 / NCIMB 13768 / 1H11)).